A 92-amino-acid chain; its full sequence is MTRSLKKNPFVANHLLRKIEKLNTKAEKEIIVTWSRASTIIPTMIGHTIAIHNGKEHLPIYITDRMVGHKLGEFAPTMNFRGHAKNDNRSRR.

Belongs to the universal ribosomal protein uS19 family.

It localises to the plastid. The protein resides in the chloroplast. Protein S19 forms a complex with S13 that binds strongly to the 16S ribosomal RNA. The sequence is that of Small ribosomal subunit protein uS19c from Platanus occidentalis (Sycamore).